We begin with the raw amino-acid sequence, 174 residues long: Transcription factor bHLH168 (174 aa).

One can recognise a bHLH domain in the interval 14–63 (SLREQRNLREKERRMRMKHLFSILSSHVSPTRRLPVPQLIDQAVSYMIQL).

The protein belongs to the bHLH protein family.

Its subcellular location is the nucleus. In Arabidopsis thaliana (Mouse-ear cress), this protein is Transcription factor bHLH168.